The chain runs to 138 residues: Cysteine desulfuration protein SufE (138 aa).

Residue cysteine 51 is the Cysteine persulfide intermediate of the active site.

The protein belongs to the SufE family. Homodimer. Interacts with SufS.

It localises to the cytoplasm. It functions in the pathway cofactor biosynthesis; iron-sulfur cluster biosynthesis. Functionally, participates in cysteine desulfuration mediated by SufS. Cysteine desulfuration mobilizes sulfur from L-cysteine to yield L-alanine and constitutes an essential step in sulfur metabolism for biosynthesis of a variety of sulfur-containing biomolecules. Functions as a sulfur acceptor for SufS, by mediating the direct transfer of the sulfur atom from the S-sulfanylcysteine of SufS, an intermediate product of cysteine desulfuration process. This Escherichia fergusonii (strain ATCC 35469 / DSM 13698 / CCUG 18766 / IAM 14443 / JCM 21226 / LMG 7866 / NBRC 102419 / NCTC 12128 / CDC 0568-73) protein is Cysteine desulfuration protein SufE.